A 198-amino-acid polypeptide reads, in one-letter code: Holliday junction branch migration complex subunit RuvA (198 aa).

Residues 1–63 (MIAYLSGAVR…EDAQLLFGFL (63 aa)) are domain I. Residues 64–142 (DTDSLRLFDL…EHLAAGAPVS (79 aa)) are domain II. A flexible linker region spans residues 143-150 (AGKAALTS). The interval 150–198 (STAGRDAIEALLALGFREPQVRSVVAELLAADPEQSADALIRKGLGKLR) is domain III.

This sequence belongs to the RuvA family. As to quaternary structure, homotetramer. Forms an RuvA(8)-RuvB(12)-Holliday junction (HJ) complex. HJ DNA is sandwiched between 2 RuvA tetramers; dsDNA enters through RuvA and exits via RuvB. An RuvB hexamer assembles on each DNA strand where it exits the tetramer. Each RuvB hexamer is contacted by two RuvA subunits (via domain III) on 2 adjacent RuvB subunits; this complex drives branch migration. In the full resolvosome a probable DNA-RuvA(4)-RuvB(12)-RuvC(2) complex forms which resolves the HJ.

It is found in the cytoplasm. In terms of biological role, the RuvA-RuvB-RuvC complex processes Holliday junction (HJ) DNA during genetic recombination and DNA repair, while the RuvA-RuvB complex plays an important role in the rescue of blocked DNA replication forks via replication fork reversal (RFR). RuvA specifically binds to HJ cruciform DNA, conferring on it an open structure. The RuvB hexamer acts as an ATP-dependent pump, pulling dsDNA into and through the RuvAB complex. HJ branch migration allows RuvC to scan DNA until it finds its consensus sequence, where it cleaves and resolves the cruciform DNA. This Deinococcus geothermalis (strain DSM 11300 / CIP 105573 / AG-3a) protein is Holliday junction branch migration complex subunit RuvA.